A 208-amino-acid polypeptide reads, in one-letter code: NAD(P)H-quinone oxidoreductase subunit I (208 aa).

4Fe-4S ferredoxin-type domains follow at residues 55-84 (GRIH…VDWV) and 95-124 (RNYS…MTEE). 8 residues coordinate [4Fe-4S] cluster: Cys-64, Cys-67, Cys-70, Cys-74, Cys-104, Cys-107, Cys-110, and Cys-114.

Belongs to the complex I 23 kDa subunit family. As to quaternary structure, NDH-1 is composed of at least 11 different subunits. [4Fe-4S] cluster serves as cofactor.

It is found in the cellular thylakoid membrane. The enzyme catalyses a plastoquinone + NADH + (n+1) H(+)(in) = a plastoquinol + NAD(+) + n H(+)(out). It carries out the reaction a plastoquinone + NADPH + (n+1) H(+)(in) = a plastoquinol + NADP(+) + n H(+)(out). Its function is as follows. NDH-1 shuttles electrons from an unknown electron donor, via FMN and iron-sulfur (Fe-S) centers, to quinones in the respiratory and/or the photosynthetic chain. The immediate electron acceptor for the enzyme in this species is believed to be plastoquinone. Couples the redox reaction to proton translocation, and thus conserves the redox energy in a proton gradient. This chain is NAD(P)H-quinone oxidoreductase subunit I, found in Prochlorococcus marinus (strain MIT 9515).